The sequence spans 469 residues: Dihydrolipoyl dehydrogenase (469 aa).

FAD is bound by residues 40–48, Lys57, and Ala120; that span reads EKAVLGGVC. An intrachain disulfide couples Cys48 to Cys53. NAD(+) contacts are provided by residues 186–190, Glu209, and 275–278; these read GGGAI and AVGV. 2 residues coordinate FAD: Asp317 and Ala325. His450 (proton acceptor) is an active-site residue.

It belongs to the class-I pyridine nucleotide-disulfide oxidoreductase family. As to quaternary structure, homodimer. Requires FAD as cofactor.

The protein resides in the cytoplasm. The catalysed reaction is N(6)-[(R)-dihydrolipoyl]-L-lysyl-[protein] + NAD(+) = N(6)-[(R)-lipoyl]-L-lysyl-[protein] + NADH + H(+). In terms of biological role, lipoamide dehydrogenase is a component of the alpha-ketoacid dehydrogenase complexes. In Chlorobaculum tepidum (strain ATCC 49652 / DSM 12025 / NBRC 103806 / TLS) (Chlorobium tepidum), this protein is Dihydrolipoyl dehydrogenase (lpd).